The following is a 298-amino-acid chain: Mitochondrial distribution and morphology protein 12 (298 aa).

An SMP-LTD domain is found at 1 to 298; it reads MSIELDWTGL…VYPHFYTLYL (298 aa). A disordered region spans residues 118–142; the sequence is SEHEESLSRWSDTESETGTCDSSSL. Residues 133–142 show a composition bias toward polar residues; the sequence is ETGTCDSSSL.

This sequence belongs to the MDM12 family. Component of the ER-mitochondria encounter structure (ERMES) or MDM complex, composed of MMM1, MDM10, MDM12 and MDM34. An MMM1 homodimer associates with one molecule of MDM12 on each side in a pairwise head-to-tail manner, and the SMP-LTD domains of MMM1 and MDM12 generate a continuous hydrophobic tunnel for phospholipid trafficking.

Its subcellular location is the mitochondrion outer membrane. It is found in the endoplasmic reticulum membrane. Its function is as follows. Component of the ERMES/MDM complex, which serves as a molecular tether to connect the endoplasmic reticulum (ER) and mitochondria. Components of this complex are involved in the control of mitochondrial shape and protein biogenesis, and function in nonvesicular lipid trafficking between the ER and mitochondria. MDM12 is required for the interaction of the ER-resident membrane protein MMM1 and the outer mitochondrial membrane-resident beta-barrel protein MDM10. The MDM12-MMM1 subcomplex functions in the major beta-barrel assembly pathway that is responsible for biogenesis of all mitochondrial outer membrane beta-barrel proteins, and acts in a late step after the SAM complex. The MDM10-MDM12-MMM1 subcomplex further acts in the TOM40-specific pathway after the action of the MDM12-MMM1 complex. Essential for establishing and maintaining the structure of mitochondria and maintenance of mtDNA nucleoids. The chain is Mitochondrial distribution and morphology protein 12 from Malassezia globosa (strain ATCC MYA-4612 / CBS 7966) (Dandruff-associated fungus).